The sequence spans 97 residues: Plastocyanin A/B (97 aa).

The region spanning 1–97 (AEVKLGSDDG…AGMKGEVTVN (97 aa)) is the Plastocyanin-like domain. Cu cation contacts are provided by His-37, Cys-82, His-85, and Met-90.

Belongs to the plastocyanin family. Cu(2+) serves as cofactor.

The protein localises to the plastid. It is found in the chloroplast thylakoid membrane. In terms of biological role, participates in electron transfer between P700 and the cytochrome b6-f complex in photosystem I. The chain is Plastocyanin A/B (PETE) from Petroselinum crispum (Parsley).